The following is a 138-amino-acid chain: ER-derived vesicles protein ERV14 (138 aa).

At 2–6 (GAWLF) the chain is on the cytoplasmic side. Residues 7 to 27 (ILAVVVNCINLFGQVHFTILY) form a helical membrane-spanning segment. Residues 28–52 (ADLEADYINPIELCSKVNKLITPEA) lie on the Extracellular side of the membrane. Residues 53-73 (ALHGALSLLFLLNGYWFVFLL) form a helical membrane-spanning segment. At 74-111 (NLPVLAYNLNKIYNKVQLLDATEIFRTLGKHKRESFLK) the chain is on the cytoplasmic side. Residues 112 to 132 (LGFHLLMFFFYLYRMIMALIA) form a helical membrane-spanning segment. At 133–138 (ESGDDF) the chain is on the extracellular side.

The protein belongs to the cornichon family.

It is found in the endoplasmic reticulum membrane. Its subcellular location is the golgi apparatus membrane. Its function is as follows. Could regulate export of the bud site and axial growth sites selection protein AXL2 and possibly other secretory proteins from the endoplasmic reticulum in COPII-coated vesicles. Seems to be required for axial budding pattern in haploid cells. The sequence is that of ER-derived vesicles protein ERV14 (ERV14) from Saccharomyces cerevisiae (strain ATCC 204508 / S288c) (Baker's yeast).